The primary structure comprises 156 residues: Small ribosomal subunit protein uS7 (156 aa).

Belongs to the universal ribosomal protein uS7 family. In terms of assembly, part of the 30S ribosomal subunit. Contacts proteins S9 and S11.

In terms of biological role, one of the primary rRNA binding proteins, it binds directly to 16S rRNA where it nucleates assembly of the head domain of the 30S subunit. Is located at the subunit interface close to the decoding center, probably blocks exit of the E-site tRNA. The chain is Small ribosomal subunit protein uS7 from Clostridium perfringens (strain ATCC 13124 / DSM 756 / JCM 1290 / NCIMB 6125 / NCTC 8237 / Type A).